Consider the following 305-residue polypeptide: Probable xyloglucan endotransglucosylase/hydrolase protein 8 (305 aa).

The first 31 residues, 1–31 (METERRIITSCSAMTALFLFMTALMASSSIA), serve as a signal peptide directing secretion. One can recognise a GH16 domain in the interval 32–231 (ATPTQSFEDN…WKKAPFVSSY (200 aa)). Asn-61 and Asn-66 each carry an N-linked (GlcNAc...) asparagine glycan. The active-site Nucleophile is the Glu-115. The active-site Proton donor is Glu-119. Glu-119 contributes to the xyloglucan binding site. Asn-123 is a glycosylation site (N-linked (GlcNAc...) asparagine). Xyloglucan is bound at residue 132-134 (QTN). N-linked (GlcNAc...) asparagine glycosylation occurs at Asn-138. Xyloglucan is bound by residues 142 to 144 (NRE), 210 to 211 (DW), and Gly-215. Intrachain disulfides connect Cys-239-Cys-248 and Cys-286-Cys-299. Arg-291 is a binding site for xyloglucan.

Belongs to the glycosyl hydrolase 16 family. XTH group 1 subfamily. Contains at least one intrachain disulfide bond essential for its enzymatic activity.

Its subcellular location is the secreted. It is found in the cell wall. It localises to the extracellular space. The protein localises to the apoplast. The catalysed reaction is breaks a beta-(1-&gt;4) bond in the backbone of a xyloglucan and transfers the xyloglucanyl segment on to O-4 of the non-reducing terminal glucose residue of an acceptor, which can be a xyloglucan or an oligosaccharide of xyloglucan.. Functionally, catalyzes xyloglucan endohydrolysis (XEH) and/or endotransglycosylation (XET). Cleaves and religates xyloglucan polymers, an essential constituent of the primary cell wall, and thereby participates in cell wall construction of growing tissues. This is Probable xyloglucan endotransglucosylase/hydrolase protein 8 (XTH8) from Arabidopsis thaliana (Mouse-ear cress).